Consider the following 310-residue polypeptide: Porphobilinogen deaminase (310 aa).

Cys-242 carries the post-translational modification S-(dipyrrolylmethanemethyl)cysteine.

The protein belongs to the HMBS family. As to quaternary structure, monomer. Requires dipyrromethane as cofactor.

It carries out the reaction 4 porphobilinogen + H2O = hydroxymethylbilane + 4 NH4(+). Its pathway is porphyrin-containing compound metabolism; protoporphyrin-IX biosynthesis; coproporphyrinogen-III from 5-aminolevulinate: step 2/4. Functionally, tetrapolymerization of the monopyrrole PBG into the hydroxymethylbilane pre-uroporphyrinogen in several discrete steps. In Shewanella sp. (strain W3-18-1), this protein is Porphobilinogen deaminase.